Here is a 118-residue protein sequence, read N- to C-terminus: Large ribosomal subunit protein bL20 (118 aa).

This sequence belongs to the bacterial ribosomal protein bL20 family.

Binds directly to 23S ribosomal RNA and is necessary for the in vitro assembly process of the 50S ribosomal subunit. It is not involved in the protein synthesizing functions of that subunit. The sequence is that of Large ribosomal subunit protein bL20 from Phenylobacterium zucineum (strain HLK1).